The sequence spans 270 residues: ATP synthase subunit b 1 (270 aa).

A helical membrane pass occupies residues 2–22 (LIDWFTVIAQLINFLVLVWLL).

This sequence belongs to the ATPase B chain family. As to quaternary structure, F-type ATPases have 2 components, F(1) - the catalytic core - and F(0) - the membrane proton channel. F(1) has five subunits: alpha(3), beta(3), gamma(1), delta(1), epsilon(1). F(0) has three main subunits: a(1), b(2) and c(10-14). The alpha and beta chains form an alternating ring which encloses part of the gamma chain. F(1) is attached to F(0) by a central stalk formed by the gamma and epsilon chains, while a peripheral stalk is formed by the delta and b chains.

Its subcellular location is the cell inner membrane. F(1)F(0) ATP synthase produces ATP from ADP in the presence of a proton or sodium gradient. F-type ATPases consist of two structural domains, F(1) containing the extramembraneous catalytic core and F(0) containing the membrane proton channel, linked together by a central stalk and a peripheral stalk. During catalysis, ATP synthesis in the catalytic domain of F(1) is coupled via a rotary mechanism of the central stalk subunits to proton translocation. Its function is as follows. Component of the F(0) channel, it forms part of the peripheral stalk, linking F(1) to F(0). The chain is ATP synthase subunit b 1 from Marinomonas sp. (strain MWYL1).